Consider the following 523-residue polypeptide: UvrABC system protein C (523 aa).

One can recognise a GIY-YIG domain in the interval 15 to 93 (HLPGCYLFKD…IKKHWPRYNI (79 aa)). A UVR domain is found at 197 to 232 (RELIESMETEMKEMAAKQMFEQAMELRDEIAALEYL).

This sequence belongs to the UvrC family. In terms of assembly, interacts with UvrB in an incision complex.

The protein resides in the cytoplasm. The UvrABC repair system catalyzes the recognition and processing of DNA lesions. UvrC both incises the 5' and 3' sides of the lesion. The N-terminal half is responsible for the 3' incision and the C-terminal half is responsible for the 5' incision. In Methanosarcina mazei (strain ATCC BAA-159 / DSM 3647 / Goe1 / Go1 / JCM 11833 / OCM 88) (Methanosarcina frisia), this protein is UvrABC system protein C.